Here is a 194-residue protein sequence, read N- to C-terminus: Probable DNA-directed RNA polymerase subunit delta (194 aa).

The HTH HARE-type domain occupies 14-83 (LSMIEVARAI…GENKWGLRSW (70 aa)). A disordered region spans residues 117 to 194 (GDEDAIDYSD…SDDEEDEEGE (78 aa)).

This sequence belongs to the RpoE family. RNAP is composed of a core of 2 alpha, a beta and a beta' subunits. The core is associated with a delta subunit and one of several sigma factors.

Functionally, participates in both the initiation and recycling phases of transcription. In the presence of the delta subunit, RNAP displays an increased specificity of transcription, a decreased affinity for nucleic acids, and an increased efficiency of RNA synthesis because of enhanced recycling. The protein is Probable DNA-directed RNA polymerase subunit delta of Streptococcus mutans serotype c (strain ATCC 700610 / UA159).